The chain runs to 371 residues: Zygote-specific protein 3 (371 aa).

The signal sequence occupies residues 1–24 (MLRSAGRVAAVALLALFALGCVSA). N-linked (GlcNAc...) asparagine glycosylation occurs at asparagine 41. 2 ANK repeats span residues 62 to 91 (TRRL…LARV) and 94 to 123 (GTTT…DPNA). 2 WW domains span residues 159-187 (EPGA…WAVP) and 283-313 (YATP…WELP).

The protein resides in the endoplasmic reticulum lumen. In terms of biological role, may have a role in the remodeling of the endoplasmic reticulum upon zygote formation. The sequence is that of Zygote-specific protein 3 (ZYS3) from Chlamydomonas reinhardtii (Chlamydomonas smithii).